A 178-amino-acid chain; its full sequence is Inorganic pyrophosphatase (178 aa).

Lys-30, Arg-44, and Tyr-56 together coordinate substrate. Positions 66, 71, and 103 each coordinate Mg(2+). Residue Tyr-140 coordinates substrate.

It belongs to the PPase family. Homohexamer. Mg(2+) serves as cofactor.

It is found in the cytoplasm. It carries out the reaction diphosphate + H2O = 2 phosphate + H(+). In terms of biological role, catalyzes the hydrolysis of inorganic pyrophosphate (PPi) forming two phosphate ions. This chain is Inorganic pyrophosphatase, found in Pyrococcus horikoshii (strain ATCC 700860 / DSM 12428 / JCM 9974 / NBRC 100139 / OT-3).